A 91-amino-acid polypeptide reads, in one-letter code: DNA/RNA-binding protein Alba (91 aa).

Position 11 is an N6-acetyllysine (Lys-11).

This sequence belongs to the histone-like Alba family. In terms of processing, acetylated. Acetylation at Lys-11 decreases DNA-binding affinity.

It localises to the cytoplasm. It is found in the chromosome. Functionally, binds double-stranded DNA tightly but without sequence specificity. Incubation with DNA in vitro gives fibrous structures 10.3 +/- 1.1 nm in thickness (naked DNA is 1.83 +/- 0.37 nm). This protein does not significantly compact DNA. This chain is DNA/RNA-binding protein Alba, found in Thermococcus kodakarensis (strain ATCC BAA-918 / JCM 12380 / KOD1) (Pyrococcus kodakaraensis (strain KOD1)).